Here is a 466-residue protein sequence, read N- to C-terminus: Coagulation factor VII (466 aa).

A signal peptide spans 1–20; sequence MVSQALRLLCLLLGLQGCLA. A propeptide spanning residues 21–60 is cleaved from the precursor; it reads AGGVAEASGGETRDXXWKPGPHRVFITQEEAHGVLHRRRR. The Gla domain maps to 61–105; it reads ANAFLEELRPGSLERECKEEQCSFEEAREIFKDLERTKLFWISYS. 4-carboxyglutamate occurs at positions 66, 67, 74, 76, 79, 80, 85, 86, 89, and 95. A disulfide bridge connects residues Cys-77 and Cys-82. Residues 106-142 enclose the EGF-like 1; calcium-binding domain; that stretch reads DGDQCASSPCQNGGSCKDQLQSYICFCLPAFEGRNCE. Cystine bridges form between Cys-110–Cys-121, Cys-115–Cys-130, Cys-132–Cys-141, Cys-151–Cys-162, Cys-158–Cys-172, Cys-174–Cys-187, Cys-195–Cys-322, Cys-219–Cys-224, Cys-238–Cys-254, and Cys-370–Cys-389. Ser-112 carries an O-linked (Glc...) serine; alternate glycan. Ser-112 is a glycosylation site (O-linked (Xyl...) serine; alternate). An O-linked (Fuc) serine glycan is attached at Ser-120. Residue Asp-123 is modified to (3R)-3-hydroxyaspartate. The EGF-like 2 domain occupies 147 to 188; that stretch reads DQLICVNENGGCEQYCSDHTGTKRSCRCHEGYSLLADGVSCT. An N-linked (GlcNAc...) asparagine glycan is attached at Asn-205. Residues 213–452 form the Peptidase S1 domain; the sequence is IVGGKVCPKG…YIEWLQKLMR (240 aa). Residues His-253 and Asp-302 each act as charge relay system in the active site. A glycan (N-linked (GlcNAc...) asparagine) is linked at Asn-382. Residue Asp-398 participates in substrate binding. Cysteines 400 and 428 form a disulfide. Catalysis depends on Ser-404, which acts as the Charge relay system.

The protein belongs to the peptidase S1 family. As to quaternary structure, heterodimer of a light chain and a heavy chain linked by a disulfide bond. In terms of processing, the vitamin K-dependent, enzymatic carboxylation of some glutamate residues allows the modified protein to bind calcium. The iron and 2-oxoglutarate dependent 3-hydroxylation of aspartate and asparagine is (R) stereospecific within EGF domains. Post-translationally, O-glycosylated. O-fucosylated by POFUT1 on a conserved serine or threonine residue found in the consensus sequence C2-X(4,5)-[S/T]-C3 of EGF domains, where C2 and C3 are the second and third conserved cysteines. In terms of processing, can be either O-glucosylated or O-xylosylated at Ser-112 by POGLUT1.

It localises to the secreted. It catalyses the reaction Selective cleavage of Arg-|-Ile bond in factor X to form factor Xa.. Initiates the extrinsic pathway of blood coagulation. Serine protease that circulates in the blood in a zymogen form. Factor VII is converted to factor VIIa by factor Xa, factor XIIa, factor IXa, or thrombin by minor proteolysis. In the presence of tissue factor and calcium ions, factor VIIa then converts factor X to factor Xa by limited proteolysis. Factor VIIa also converts factor IX to factor IXa in the presence of tissue factor and calcium. In Pan troglodytes (Chimpanzee), this protein is Coagulation factor VII (F7).